Consider the following 315-residue polypeptide: Homoserine kinase (315 aa).

An ATP-binding site is contributed by 96 to 106 (PHSRGLGSSAA).

Belongs to the GHMP kinase family. Homoserine kinase subfamily.

It localises to the cytoplasm. It catalyses the reaction L-homoserine + ATP = O-phospho-L-homoserine + ADP + H(+). It functions in the pathway amino-acid biosynthesis; L-threonine biosynthesis; L-threonine from L-aspartate: step 4/5. Functionally, catalyzes the ATP-dependent phosphorylation of L-homoserine to L-homoserine phosphate. In Mycobacterium leprae (strain Br4923), this protein is Homoserine kinase.